We begin with the raw amino-acid sequence, 304 residues long: UDP-3-O-acyl-N-acetylglucosamine deacetylase (304 aa).

His78, His237, and Asp241 together coordinate Zn(2+). The Proton donor role is filled by His264.

This sequence belongs to the LpxC family. The cofactor is Zn(2+).

The enzyme catalyses a UDP-3-O-[(3R)-3-hydroxyacyl]-N-acetyl-alpha-D-glucosamine + H2O = a UDP-3-O-[(3R)-3-hydroxyacyl]-alpha-D-glucosamine + acetate. Its pathway is glycolipid biosynthesis; lipid IV(A) biosynthesis; lipid IV(A) from (3R)-3-hydroxytetradecanoyl-[acyl-carrier-protein] and UDP-N-acetyl-alpha-D-glucosamine: step 2/6. Functionally, catalyzes the hydrolysis of UDP-3-O-myristoyl-N-acetylglucosamine to form UDP-3-O-myristoylglucosamine and acetate, the committed step in lipid A biosynthesis. In Methylococcus capsulatus (strain ATCC 33009 / NCIMB 11132 / Bath), this protein is UDP-3-O-acyl-N-acetylglucosamine deacetylase.